Consider the following 170-residue polypeptide: Small ribosomal subunit protein uS3mA (170 aa).

The transit peptide at 1-30 (MAAPVMSALGRLQGLIRTERSLLTHVQSRC) directs the protein to the mitochondrion.

It belongs to the universal ribosomal protein uS3 family. Component of the mitochondrial ribosome small subunit (28S) which comprises a 12S rRNA and about 30 distinct proteins.

Its subcellular location is the mitochondrion. This is Small ribosomal subunit protein uS3mA (mrps24-a) from Xenopus laevis (African clawed frog).